Reading from the N-terminus, the 282-residue chain is 4-diphosphocytidyl-2-C-methyl-D-erythritol kinase (282 aa).

Lys9 is a catalytic residue. Residue 98-108 (PMGGGLGGGSS) participates in ATP binding. Asp140 is an active-site residue.

This sequence belongs to the GHMP kinase family. IspE subfamily. Homodimer.

The catalysed reaction is 4-CDP-2-C-methyl-D-erythritol + ATP = 4-CDP-2-C-methyl-D-erythritol 2-phosphate + ADP + H(+). Its pathway is isoprenoid biosynthesis; isopentenyl diphosphate biosynthesis via DXP pathway; isopentenyl diphosphate from 1-deoxy-D-xylulose 5-phosphate: step 3/6. Its function is as follows. Catalyzes the phosphorylation of the position 2 hydroxy group of 4-diphosphocytidyl-2C-methyl-D-erythritol. This chain is 4-diphosphocytidyl-2-C-methyl-D-erythritol kinase, found in Salmonella schwarzengrund (strain CVM19633).